Reading from the N-terminus, the 432-residue chain is Delta-aminolevulinic acid dehydratase, chloroplastic (432 aa).

A disordered region spans residues alanine 84–asparagine 113. The Schiff-base intermediate with substrate role is filled by lysine 300. The 5-aminolevulinate site is built by arginine 310 and lysine 322. Glutamate 338 contacts Mg(2+). Lysine 353 (schiff-base intermediate with substrate) is an active-site residue. Residues serine 379 and tyrosine 418 each coordinate 5-aminolevulinate.

Belongs to the ALAD family. In terms of assembly, homooctamer. It depends on Mg(2+) as a cofactor.

Its subcellular location is the plastid. The protein localises to the chloroplast. The enzyme catalyses 2 5-aminolevulinate = porphobilinogen + 2 H2O + H(+). The protein operates within porphyrin-containing compound metabolism; protoporphyrin-IX biosynthesis; coproporphyrinogen-III from 5-aminolevulinate: step 1/4. Catalyzes an early step in the biosynthesis of tetrapyrroles. Binds two molecules of 5-aminolevulinate per subunit, each at a distinct site, and catalyzes their condensation to form porphobilinogen. This chain is Delta-aminolevulinic acid dehydratase, chloroplastic (HEMB), found in Physcomitrium patens (Spreading-leaved earth moss).